Consider the following 402-residue polypeptide: Multidrug resistance protein MdtH (402 aa).

The next 11 membrane-spanning stretches (helical) occupy residues 13–33, 34–54, 99–116, 139–159, 165–185, 214–234, 243–263, 277–297, 300–320, 340–360, and 368–388; these read YFLLVDNMLVVLGFFVVFPLI, SIRFVDQMGWAALMVGIALGL, PWVLWLSCILSGLGGTLF, LLMMQDSAGAVIGALLGSWLL, LVCSAGAALFIACAAFNAWYL, VLTLTGYYMLAVQVMLMLPIM, AAVKWMYAIEATISLTLLYPI, LMAGLLVMTLAMLPIGMTSSL, LFTLICLFYIGSIIAEPARET, LGLAFGGALGYAGGGWLFDAG, and LPWLMLGAIGFITFLALWWQF.

The protein belongs to the major facilitator superfamily. DHA1 family. MdtH (TC 2.A.1.2.21) subfamily.

It is found in the cell inner membrane. In Klebsiella pneumoniae (strain 342), this protein is Multidrug resistance protein MdtH.